Reading from the N-terminus, the 367-residue chain is Gibberellin 20 oxidase 3 (367 aa).

The region spanning 198–304 (DGDPVMRLNH…RRSLTFFLNP (107 aa)) is the Fe2OG dioxygenase domain. Y208 provides a ligand contact to 2-oxoglutarate. Fe cation-binding residues include H223, D225, and H285. 2 residues coordinate 2-oxoglutarate: R295 and S297.

It belongs to the iron/ascorbate-dependent oxidoreductase family. Requires Fe(2+) as cofactor. L-ascorbate serves as cofactor.

It carries out the reaction gibberellin A12 + 2 2-oxoglutarate + 3 O2 + H(+) = gibberellin A9 + 2 succinate + 3 CO2 + 2 H2O. It catalyses the reaction gibberellin A53 + 2 2-oxoglutarate + 3 O2 + H(+) = gibberellin A20 + 2 succinate + 3 CO2 + 2 H2O. In terms of biological role, key oxidase enzyme in the biosynthesis of gibberellin. Catalyzes the formation of bioactive gibberellins (GAs) via a three-step oxidation at C-20 of the GA skeleton. Controls the elongation of the vegetative shoot and plant height by the regulation of active gibberellin levels. This chain is Gibberellin 20 oxidase 3, found in Oryza sativa subsp. japonica (Rice).